A 75-amino-acid polypeptide reads, in one-letter code: UPF0346 protein LGAS_0911 (75 aa).

Belongs to the UPF0346 family.

The sequence is that of UPF0346 protein LGAS_0911 from Lactobacillus gasseri (strain ATCC 33323 / DSM 20243 / BCRC 14619 / CIP 102991 / JCM 1131 / KCTC 3163 / NCIMB 11718 / NCTC 13722 / AM63).